Consider the following 329-residue polypeptide: Malate dehydrogenase (329 aa).

Residue 12–18 (GAAGQIG) participates in NAD(+) binding. Residues arginine 95 and arginine 101 each contribute to the substrate site. NAD(+) contacts are provided by residues asparagine 108, glutamine 115, and 132 to 134 (VGN). Substrate is bound by residues asparagine 134 and arginine 165. Histidine 190 (proton acceptor) is an active-site residue.

This sequence belongs to the LDH/MDH superfamily. MDH type 2 family.

It catalyses the reaction (S)-malate + NAD(+) = oxaloacetate + NADH + H(+). Catalyzes the reversible oxidation of malate to oxaloacetate. The chain is Malate dehydrogenase from Bordetella bronchiseptica (strain ATCC BAA-588 / NCTC 13252 / RB50) (Alcaligenes bronchisepticus).